The following is a 270-amino-acid chain: MHRVKAFKNLRLLITGKKEEKNKKPVEIPARDIAANYCSRHEYDWGMFVKNENPFRGITYQSYNAFKLRRFIPDMNQEDHKEYLFLAEQAEQEALKQELKEQDLYTMIEEISDDDVFTNPTMTDLAEKLGLEDESDDDDSGINFDVSTLADEDTLYQREILDREERRKENNISNESVSEEPESPLFNDKGRIVNCSTCIYNNKLQKRGGYGVEEYAEHYVFPDDKDDNLVCLLSDADRVIREIENSNFDIEGFEQSIDYDMLIHDELFIS.

A disordered region spans residues 166–186 (RRKENNISNESVSEEPESPLF).

This is an uncharacterized protein from Ostreid herpesvirus 1 (isolate France) (OsHV-1).